The sequence spans 95 residues: MSKDSKMRATINQKLTEMGERERLKELLRAKLTECGWRDQLKALCKDVIKEKGLEHATVEDLVVEITPKGRVLVPDSVKRELLQRIRAFLAQHAT.

This sequence belongs to the ENY2 family. Component of the nuclear pore complex (NPC)-associated TREX-2 complex (transcription and export complex 2). Component of the SAGA transcription coactivator-HAT complex. Within the SAGA complex, participates in a subcomplex of SAGA called the DUB module (deubiquitination module).

It is found in the nucleus. It localises to the nucleoplasm. Functionally, involved in mRNA export coupled transcription activation by association with both the TREX-2 and the SAGA complexes. The transcription regulatory histone acetylation (HAT) complex SAGA is a multiprotein complex that activates transcription by remodeling chromatin and mediating histone acetylation and deubiquitination. Within the SAGA complex, participates in a subcomplex that specifically deubiquitinates histones. The SAGA complex is recruited to specific gene promoters by activators, where it is required for transcription. The TREX-2 complex functions in docking export-competent ribonucleoprotein particles (mRNPs) to the nuclear entrance of the nuclear pore complex (nuclear basket). TREX-2 participates in mRNA export and accurate chromatin positioning in the nucleus by tethering genes to the nuclear periphery. The protein is Transcription and mRNA export factor ENY2-1 (eny2-1) of Salmo salar (Atlantic salmon).